A 1335-amino-acid polypeptide reads, in one-letter code: Protein SPATA31F1 (1335 aa).

Residues 8–28 (LWEVGYPLYIYGSIFIVIVII) form a helical membrane-spanning segment. Disordered stretches follow at residues 403–424 (ALKALSGPHPQSGGQDNDSGSD), 480–502 (LPKTSPQSAPPSSPLSPNWMSPS), 972–1002 (VQQNQKQSNSKAVPQGSAHSVSKISQPSGDM), 1019–1141 (PSLE…LQDS), and 1248–1335 (ENVA…GHPT). Polar residues predominate over residues 414-424 (SGGQDNDSGSD). Positions 972-1000 (VQQNQKQSNSKAVPQGSAHSVSKISQPSG) are enriched in polar residues. Basic and acidic residues-rich tracts occupy residues 1047–1064 (NREDPEETKAARDHREGD), 1071–1083 (STREERRPAEDQR), and 1129–1139 (PGEKESEKDLQ).

The protein belongs to the SPATA31 family.

The protein localises to the membrane. The chain is Protein SPATA31F1 from Homo sapiens (Human).